A 655-amino-acid chain; its full sequence is ATP-dependent RNA helicase mss116, mitochondrial (655 aa).

The N-terminal 56 residues, 1–56, are a transit peptide targeting the mitochondrion; the sequence is MMLGAVRRYGVVHALRASVPRTICRPSNSQLLRCQTSPVTACPQSVRLLHKSSPFF. The Q motif motif lies at 84–113; that stretch reads DLAERGLVDPKIIRAIVKDMNIKTMTDVQS. A Helicase ATP-binding domain is found at 116–307; it reads LREILQGDDV…RKTMKPNFKF (192 aa). ATP is bound at residue 129–136; the sequence is AKTGTGKT. The short motif at 251–254 is the DEAD box element; sequence DEAD. Positions 341–503 constitute a Helicase C-terminal domain; sequence EFVTKYVEGE…TFATATVDMT (163 aa). The segment at 594 to 642 is disordered; sequence YRGSSDNMSTRPDYRGGDRDMWASNSRRGREFNSDRRESRFGNHRNADD. 2 stretches are compositionally biased toward basic and acidic residues: residues 605 to 614 and 621 to 642; these read PDYRGGDRDM and RGREFNSDRRESRFGNHRNADD.

It belongs to the DEAD box helicase family. DDX18/HAS1 subfamily.

Its subcellular location is the mitochondrion matrix. The enzyme catalyses ATP + H2O = ADP + phosphate + H(+). Its function is as follows. ATP-dependent RNA helicase required for mitochondrial splicing of group I and II introns. Also required for efficient mitochondrial translation. The sequence is that of ATP-dependent RNA helicase mss116, mitochondrial (mss116) from Aspergillus fumigatus (strain ATCC MYA-4609 / CBS 101355 / FGSC A1100 / Af293) (Neosartorya fumigata).